The following is a 289-amino-acid chain: ATP synthase gamma chain (289 aa).

This sequence belongs to the ATPase gamma chain family. In terms of assembly, F-type ATPases have 2 components, CF(1) - the catalytic core - and CF(0) - the membrane proton channel. CF(1) has five subunits: alpha(3), beta(3), gamma(1), delta(1), epsilon(1). CF(0) has three main subunits: a, b and c.

Its subcellular location is the cell inner membrane. Produces ATP from ADP in the presence of a proton gradient across the membrane. The gamma chain is believed to be important in regulating ATPase activity and the flow of protons through the CF(0) complex. The protein is ATP synthase gamma chain of Janthinobacterium sp. (strain Marseille) (Minibacterium massiliensis).